Here is a 796-residue protein sequence, read N- to C-terminus: MTKLIAPSEIVGGVPVFKPTYEQFEDFYAYCKAINKYGMKSGVVKVIPPKEWKDKLDLPYSAETLQKIKIKSPIQQHISGNKGLFMVQNVEKNKTYNIIQWKDLSKDYVPPEDPKARRNSRKGSVSKSTKLKLKNFESSFNIDDFEQFRTEYTIDLSDFQNTERLKFLEEYYWKTLNFTTPMYGADTPGSIFPEGLNVWNVAKLPNILDHMETKVPGVNDSYLYAGLWKASFSWHLEDQDLYSINYIHFGAPKQWYSIPQEDRFKFYKFMQEQFPEEAKNCPEFLRHKMFLASPKLLQENGIRCNEIVHHEGEFMITYPYGYHAGFNYGYNLAESVNFALEEWLPIGKKAGKCHCISDSVEIDVKKLAKSWRDNNKESKGTPPLNQLPNPAMPLLHRPTLKEMESSSLRSTSPDVGHFSNFKSKSSGVSSPLLSRMKDYSNIVEPTLEDPTLKLKRISSFQEQPLNKLLKRETSQTAMLTDHEDNIVAMSLTSMANSAASSPRLPLSRLNSSNELSNAQPLLDMTNNTLAFPRPNGPSGLNPLLYISNKNISGISHSAPHSPVNPNISLIKRVKSPNIVTLNISRESSRSPIALNYEARQQHSQQHSFSTPSTVSNLSTSVLGPLSDTNDIKTPHPERPNHKTANRILKKESPVETSKSNLILSKVASTRQEDSFTSRNDDLDKEQGSSPLNSKFAPEEIVLSGKNKIYICKECQRKFSSGHHLTRHKKSVHSGEKPHSCPKCGKRFKRRDHVLQHLNKKIPCISNETTVDAPIMNPTVQPQDGKAAINQQSTPLN.

Residues 14–55 form the JmjN domain; sequence VPVFKPTYEQFEDFYAYCKAINKYGMKSGVVKVIPPKEWKDK. Residues 193-355 enclose the JmjC domain; that stretch reads PEGLNVWNVA…IGKKAGKCHC (163 aa). Thr399 is subject to Phosphothreonine. 6 positions are modified to phosphoserine: Ser430, Ser459, Ser557, Ser561, Ser575, and Ser584. Residues 455 to 471 carry the Bipartite nuclear localization signal motif; that stretch reads KRISSFQEQPLNKLLKR. Positions 599 to 692 are disordered; the sequence is RQQHSQQHSF…DKEQGSSPLN (94 aa). Residues 601–621 are compositionally biased toward polar residues; it reads QHSQQHSFSTPSTVSNLSTSV. The segment covering 629–640 has biased composition (basic and acidic residues); it reads NDIKTPHPERPN. Position 652 is a phosphoserine (Ser652). Positions 654-669 are enriched in polar residues; sequence VETSKSNLILSKVAST. Over residues 670–686 the composition is skewed to basic and acidic residues; the sequence is RQEDSFTSRNDDLDKEQ. Residue Ser689 is modified to Phosphoserine. The C2H2-type 1 zinc-finger motif lies at 709 to 732; sequence YICKECQRKFSSGHHLTRHKKSVH. Residues 738-763 form a C2H2-type 2; atypical zinc finger; it reads HSCPKCGKRFKRRDHVLQHLNKKIPC. A disordered region spans residues 774–796; it reads IMNPTVQPQDGKAAINQQSTPLN.

Post-translationally, RAD53-dependent phosphorylated in response to DNA damage.

The protein resides in the nucleus. Its function is as follows. Transcriptional repressor of photolyase PHR1. Recognizes and binds the sequence AG(4) in the upstream repressing sequence of PHR1. Derepresses PHR1 transcription when phosphorylated. The sequence is that of DNA damage-responsive transcriptional repressor RPH1 (RPH1) from Saccharomyces cerevisiae (strain ATCC 204508 / S288c) (Baker's yeast).